A 1060-amino-acid polypeptide reads, in one-letter code: Protein FAM184B (1060 aa).

Over residues 1-17 (MASALNSKINPPGTCQG) the composition is skewed to polar residues. The segment at 1–24 (MASALNSKINPPGTCQGSKADGGA) is disordered. A coiled-coil region spans residues 51–159 (ALNTRQDEAE…EMLELKADYE (109 aa)). The tract at residues 165-191 (LTSHEATPQGRLPQESPETKSEPGQGP) is disordered. 2 coiled-coil regions span residues 192 to 333 (EMQE…DRMM) and 402 to 502 (MKQQ…RLEE). 3 disordered regions span residues 532–566 (QDPC…EERT), 681–700 (TEER…HQTH), and 762–803 (GRQQ…GSGE). 3 stretches are compositionally biased toward basic and acidic residues: residues 536–554 (LKLD…KLAA), 681–690 (TEERLKKESS), and 773–785 (DSKD…EERG). Residues 584-769 (LKEKTSKIQR…ALGRQQASSQ (186 aa)) adopt a coiled-coil conformation. Positions 806-934 (GLWEENAQLQ…KQLTEERRFH (129 aa)) form a coiled coil. 2 stretches are compositionally biased toward polar residues: residues 994 to 1009 (SRIN…SLDP) and 1018 to 1030 (KPNQ…TATR). Positions 994–1050 (SRINAPPITTSPSLDPSPSCGRTYKPNQSTDAKTATRTPDGETAQAKEVQQKQGSPH) are disordered.

The protein belongs to the FAM184 family.

The sequence is that of Protein FAM184B (FAM184B) from Homo sapiens (Human).